We begin with the raw amino-acid sequence, 440 residues long: IAA-amino acid hydrolase ILR1-like 4 (440 aa).

Residues methionine 1–cysteine 23 form the signal peptide. Mn(2+) is bound by residues cysteine 134, histidine 136, glutamate 170, histidine 194, and histidine 397. Residues lysine 437–leucine 440 carry the Prevents secretion from ER motif.

The protein belongs to the peptidase M20 family. Mn(2+) serves as cofactor. In terms of tissue distribution, expressed in leaves, stems, roots, siliques and flowers. Detected in the vascular tissue of cotyledons and roots, in adult leaves, stems, siliques, petals, hydathodes and in silique abscission zones and funicles.

The protein resides in the endoplasmic reticulum lumen. The catalysed reaction is a jasmonyl-L-amino acid + H2O = a jasmonate + an L-alpha-amino acid. Hydrolyzes certain amino acid conjugates of the plant growth regulator indole-3-acetic acid (IAA), including IAA-Ala, IAA-Asn, IAA-Cys, IAA-Glu, IAA-Met, IAA-Ser and IAA-Gly. Has a lower efficiency with IAA-Phe, IAA-Leu and IAA-Val and no activity with IAA-Ile. Important for IAA-Leu hydrolysis in roots. Also hydrolyzes amino acid conjugates of jasmonic acid and 12-hydroxy jasmonic acid. The polypeptide is IAA-amino acid hydrolase ILR1-like 4 (Arabidopsis thaliana (Mouse-ear cress)).